The primary structure comprises 215 residues: Cytochrome b6 (215 aa).

The chain crosses the membrane as a helical span at residues 32–52 (IFYCLGGITLTCFLVQVATGF). Cys35 contributes to the heme c binding site. Positions 86 and 100 each coordinate heme b. The next 3 helical transmembrane spans lie at 90 to 110 (ASMM…TGGF), 116 to 136 (LTWV…VTGY), and 186 to 206 (LHTF…FPMI). Residues His187 and His202 each coordinate heme b.

Belongs to the cytochrome b family. PetB subfamily. In terms of assembly, the 4 large subunits of the cytochrome b6-f complex are cytochrome b6, subunit IV (17 kDa polypeptide, PetD), cytochrome f and the Rieske protein, while the 4 small subunits are PetG, PetL, PetM and PetN. The complex functions as a dimer. It depends on heme b as a cofactor. Heme c is required as a cofactor.

It is found in the plastid. It localises to the chloroplast thylakoid membrane. In terms of biological role, component of the cytochrome b6-f complex, which mediates electron transfer between photosystem II (PSII) and photosystem I (PSI), cyclic electron flow around PSI, and state transitions. This chain is Cytochrome b6, found in Cucumis sativus (Cucumber).